A 389-amino-acid chain; its full sequence is Nuclear receptor subfamily 2 group F member 1-B (389 aa).

The segment at 19-39 (DDQSAAGREHLQHRHSPKSAE) is disordered. The nuclear receptor DNA-binding region spans 51–126 (HVECVVCGDK…VGMRREAVQR (76 aa)). 2 consecutive NR C4-type zinc fingers follow at residues 54 to 74 (CVVCGDKSSGKHYGQFTCEGC) and 90 to 109 (CRANRNCPVDQHHRNQCQYC). An NR LBD domain is found at 152-378 (YLSGYISLLL…TLIRDMLLSG (227 aa)).

It belongs to the nuclear hormone receptor family. NR2 subfamily. As to expression, expressed the retina, where expression is restricted to the outer nuclear layer.

It localises to the nucleus. In terms of biological role, putative transcription factor that is required in photoreceptor cells precursors during eye development. The chain is Nuclear receptor subfamily 2 group F member 1-B from Danio rerio (Zebrafish).